We begin with the raw amino-acid sequence, 687 residues long: Fatty acid oxidation complex subunit alpha (687 aa).

An enoyl-CoA hydratase region spans residues 1-191 (MKNTSAFAWT…KLGVVDASVP (191 aa)). Residues 307-687 (KSIDYVGVLG…ADKYGDRFIE (381 aa)) form a 3-hydroxyacyl-CoA dehydrogenase region.

This sequence in the N-terminal section; belongs to the enoyl-CoA hydratase/isomerase family. The protein in the central section; belongs to the 3-hydroxyacyl-CoA dehydrogenase family. In terms of assembly, heterotetramer of two alpha chains (FadJ) and two beta chains (FadI).

Its subcellular location is the cytoplasm. The catalysed reaction is a (3S)-3-hydroxyacyl-CoA = a (2E)-enoyl-CoA + H2O. It catalyses the reaction a 4-saturated-(3S)-3-hydroxyacyl-CoA = a (3E)-enoyl-CoA + H2O. The enzyme catalyses a (3S)-3-hydroxyacyl-CoA + NAD(+) = a 3-oxoacyl-CoA + NADH + H(+). It carries out the reaction (3S)-3-hydroxybutanoyl-CoA = (3R)-3-hydroxybutanoyl-CoA. The protein operates within lipid metabolism; fatty acid beta-oxidation. Catalyzes the formation of a hydroxyacyl-CoA by addition of water on enoyl-CoA. Also exhibits 3-hydroxyacyl-CoA epimerase and 3-hydroxyacyl-CoA dehydrogenase activities. The protein is Fatty acid oxidation complex subunit alpha of Aliivibrio fischeri (strain ATCC 700601 / ES114) (Vibrio fischeri).